We begin with the raw amino-acid sequence, 592 residues long: V-type ATP synthase alpha chain 1 (592 aa).

233 to 240 contacts ATP; the sequence is GPFGSGKT.

The protein belongs to the ATPase alpha/beta chains family.

The enzyme catalyses ATP + H2O + 4 H(+)(in) = ADP + phosphate + 5 H(+)(out). Functionally, produces ATP from ADP in the presence of a proton gradient across the membrane. The V-type alpha chain is a catalytic subunit. The protein is V-type ATP synthase alpha chain 1 of Clostridium tetani (strain Massachusetts / E88).